A 546-amino-acid chain; its full sequence is Chaperonin GroEL (546 aa).

Residues 30–33 (TLGP), lysine 51, 87–91 (DGTTT), glycine 415, 479–481 (NAA), and aspartate 495 each bind ATP.

The protein belongs to the chaperonin (HSP60) family. In terms of assembly, forms a cylinder of 14 subunits composed of two heptameric rings stacked back-to-back. Interacts with the co-chaperonin GroES.

The protein resides in the cytoplasm. The enzyme catalyses ATP + H2O + a folded polypeptide = ADP + phosphate + an unfolded polypeptide.. Its function is as follows. Together with its co-chaperonin GroES, plays an essential role in assisting protein folding. The GroEL-GroES system forms a nano-cage that allows encapsulation of the non-native substrate proteins and provides a physical environment optimized to promote and accelerate protein folding. The polypeptide is Chaperonin GroEL (Pseudomonas entomophila (strain L48)).